The sequence spans 66 residues: Gallinacin-8 (66 aa).

The signal sequence occupies residues 1–19 (MKILYLLLAVLLTVLQSSL). The propeptide occupies 20–25 (GFMRVP). 3 cysteine pairs are disulfide-bonded: cysteine 31–cysteine 60, cysteine 38–cysteine 54, and cysteine 43–cysteine 61.

The protein belongs to the beta-defensin family. Expressed in the liver, kidney, gall bladder, testis, ovary and male and femae reproductive tracts. Expressed in the ovarian stroma and the theca and granulosa layers of the ovarian follicle.

The protein resides in the secreted. Its subcellular location is the cytoplasmic granule. Has bactericidal activity. The polypeptide is Gallinacin-8 (GAL8) (Gallus gallus (Chicken)).